The chain runs to 190 residues: Protein GrpE (190 aa).

A disordered region spans residues 1–42 (MNEKDNQTTSEPENEQEIIDVNDSGEQPEENETEQPQEEAVE). Positions 26–42 (EQPEENETEQPQEEAVE) are enriched in acidic residues.

This sequence belongs to the GrpE family. In terms of assembly, homodimer.

The protein localises to the cytoplasm. Its function is as follows. Participates actively in the response to hyperosmotic and heat shock by preventing the aggregation of stress-denatured proteins, in association with DnaK and GrpE. It is the nucleotide exchange factor for DnaK and may function as a thermosensor. Unfolded proteins bind initially to DnaJ; upon interaction with the DnaJ-bound protein, DnaK hydrolyzes its bound ATP, resulting in the formation of a stable complex. GrpE releases ADP from DnaK; ATP binding to DnaK triggers the release of the substrate protein, thus completing the reaction cycle. Several rounds of ATP-dependent interactions between DnaJ, DnaK and GrpE are required for fully efficient folding. The sequence is that of Protein GrpE from Oceanobacillus iheyensis (strain DSM 14371 / CIP 107618 / JCM 11309 / KCTC 3954 / HTE831).